The following is an 809-amino-acid chain: Integrin beta pat-3 (809 aa).

The first 19 residues, 1–19, serve as a signal peptide directing secretion; that stretch reads MPPSTSLLLLAALLPFALP. The Extracellular segment spans residues 20-737; it reads ASDWKTGEVT…KHKDCPPPVP (718 aa). N-linked (GlcNAc...) asparagine glycans are attached at residues N47, N141, N269, N373, and N400. The VWFA domain maps to 153 to 352; the sequence is DLYYLMDLSY…IFAVTKNNQD (200 aa). 15 cysteine pairs are disulfide-bonded: C476-C496, C489-C499, C501-C510, C512-C543, C526-C541, C535-C546, C548-C563, C565-C586, C570-C584, C578-C589, C591-C600, C602-C625, C609-C623, C617-C628, and C630-C644. I-EGF domains lie at 476–511, 512–564, 565–601, and 602–645; these read CERQ…KYCE, CNRP…EFCE, CDNF…RACE, and CPIS…AKCE. N-linked (GlcNAc...) asparagine glycosylation occurs at N530. Residues N672, N693, and N721 are each glycosylated (N-linked (GlcNAc...) asparagine). The chain crosses the membrane as a helical span at residues 738-758; that stretch reads VLAIVLGVIAGIVILGILLLL. At 759–809 the chain is on the cytoplasmic side; the sequence is LWKLLTVLHDRSEYATFNNERLMAKWDTNENPIYKQATTTFKNPVYAGKAN. Y792 bears the Phosphotyrosine mark.

Belongs to the integrin beta chain family. Heterodimer of an alpha and a beta subunit. Interacts with alpha subunit ina-1. Interacts with alpha subunit pat-2. Component of an integrin containing attachment complex, composed of at least pat-2, pat-3, pat-4, pat-6, unc-52, unc-97 and unc-112. May interact with tns-1 (via C-terminus). In terms of processing, phosphorylated. Dephosphorylated by dep-1. As to expression, expressed in body wall muscles (at protein level). Expressed in gonadal sheath cells and spermatheca. Expressed in vulval cells and along the basal laminae that separate the vulval cells from the uterus (at the protein level).

The protein resides in the cell membrane. It localises to the lateral cell membrane. The protein localises to the basolateral cell membrane. Its subcellular location is the cytoplasm. It is found in the myofibril. The protein resides in the sarcomere. It localises to the m line. The protein localises to the cell junction. Its subcellular location is the focal adhesion. Its function is as follows. Integrin alpha ina-1/beta pat-3 is a receptor for laminin. Integrin alpha pat-2/beta pat-3 recognizes the sequence R-G-D in its ligands. Plays a role in cell migration, morphogenesis and probably in cell-cell interactions. During gonad morphogenesis, involved in distal tip cell (DTC)-mediated guidance of gonad elongation, in maintaining their sharp tapering morphology and in their migration. Component of an integrin containing attachment complex, which is required for muscle development and maintenance. Involved in the assembly of dense bodies and M lines during body wall muscle embryonic development by recruiting one of their components, cpna-1, to integrin-mediated attachment sites. May play a similar role in the assembly of dense bodies in gonadal myoepithelial sheath cells. Probably by acting as a receptor for apoptotic cells, plays a role in the clearance of apoptotic cells during mid-embryogenesis. Required for ovulation. Dephosphorylated, probably within the alpha pat-2/beta pat-3 integrin receptor complex, by the phosphatase dep-1, which leads to down-stream effects including the negative regulation of let-23 signaling and vulval induction. When unphosphosphorylated, recruits the cytoplasmic adapter protein tln-1 to the plasma membrane of secondary vulval precursor cells. This promotes the linking of focal adhesion sites to the F-actin cytoskeleton, and it also acts to restrict the mobility of the let-23 receptor on the plasma membrane of vulval cells which thereby attenuates let-23 signaling. Plays a role in axon regeneration after injury. The sequence is that of Integrin beta pat-3 from Caenorhabditis elegans.